A 204-amino-acid chain; its full sequence is MIGRLQGILLEKQPPEILLNVQGVGYELLLPMTSFYDLPEIGQETTLFTHLVVREDAHLLFGFAQKTDRTLFRELIKTNGVGPKLALAILSAMSVEQFAYAIEREELSKLTKIPGVGKKTAERLLVELKGKFKGVKQSDFFVESTHIPLSPSIESHSESSSDEAISALIALGYKPVEAEKMVKRVAKPELTSEQVIREALKVAL.

The interval 1–64 (MIGRLQGILL…EDAHLLFGFA (64 aa)) is domain I. Positions 65-143 (QKTDRTLFRE…GVKQSDFFVE (79 aa)) are domain II. Residues 144–155 (STHIPLSPSIES) are flexible linker. Residues 156 to 204 (HSESSSDEAISALIALGYKPVEAEKMVKRVAKPELTSEQVIREALKVAL) are domain III.

It belongs to the RuvA family. Homotetramer. Forms an RuvA(8)-RuvB(12)-Holliday junction (HJ) complex. HJ DNA is sandwiched between 2 RuvA tetramers; dsDNA enters through RuvA and exits via RuvB. An RuvB hexamer assembles on each DNA strand where it exits the tetramer. Each RuvB hexamer is contacted by two RuvA subunits (via domain III) on 2 adjacent RuvB subunits; this complex drives branch migration. In the full resolvosome a probable DNA-RuvA(4)-RuvB(12)-RuvC(2) complex forms which resolves the HJ.

Its subcellular location is the cytoplasm. In terms of biological role, the RuvA-RuvB-RuvC complex processes Holliday junction (HJ) DNA during genetic recombination and DNA repair, while the RuvA-RuvB complex plays an important role in the rescue of blocked DNA replication forks via replication fork reversal (RFR). RuvA specifically binds to HJ cruciform DNA, conferring on it an open structure. The RuvB hexamer acts as an ATP-dependent pump, pulling dsDNA into and through the RuvAB complex. HJ branch migration allows RuvC to scan DNA until it finds its consensus sequence, where it cleaves and resolves the cruciform DNA. The chain is Holliday junction branch migration complex subunit RuvA from Haemophilus influenzae (strain ATCC 51907 / DSM 11121 / KW20 / Rd).